Reading from the N-terminus, the 362-residue chain is Sulfate/thiosulfate import ATP-binding protein CysA (362 aa).

Residues 3-237 enclose the ABC transporter domain; it reads IEINNISKYF…PASRFVMEFL (235 aa). 35–42 is a binding site for ATP; it reads GPSGSGKT.

The protein belongs to the ABC transporter superfamily. Sulfate/tungstate importer (TC 3.A.1.6) family. In terms of assembly, the complex is composed of two ATP-binding proteins (CysA), two transmembrane proteins (CysT and CysW) and a solute-binding protein (CysP).

It is found in the cell inner membrane. The enzyme catalyses sulfate(out) + ATP + H2O = sulfate(in) + ADP + phosphate + H(+). The catalysed reaction is thiosulfate(out) + ATP + H2O = thiosulfate(in) + ADP + phosphate + H(+). Its function is as follows. Part of the ABC transporter complex CysAWTP involved in sulfate/thiosulfate import. Responsible for energy coupling to the transport system. The protein is Sulfate/thiosulfate import ATP-binding protein CysA of Photorhabdus laumondii subsp. laumondii (strain DSM 15139 / CIP 105565 / TT01) (Photorhabdus luminescens subsp. laumondii).